A 231-amino-acid chain; its full sequence is Ribosyldihydronicotinamide dehydrogenase [quinone] (231 aa).

FAD-binding positions include His-12 and 18-21 (FNGS). Ser-80 carries the phosphoserine modification. 104-107 (LYWF) contacts FAD. 127 to 129 (FDI) lines the substrate pocket. FAD-binding positions include 148-151 (TTGG) and Tyr-156. 2 residues coordinate Zn(2+): His-174 and His-178. Glu-194 serves as a coordination point for FAD. Phosphoserine is present on Ser-197. Residue Arg-201 coordinates FAD. A Zn(2+)-binding site is contributed by Cys-223.

The protein belongs to the NAD(P)H dehydrogenase (quinone) family. In terms of assembly, homodimer. The cofactor is Zn(2+). It depends on FAD as a cofactor.

The protein localises to the cytoplasm. It carries out the reaction 1-(beta-D-ribofuranosyl)-1,4-dihydronicotinamide + a quinone + H(+) = beta-nicotinamide D-riboside + a quinol. Inhibited by melatonin, resveratrol and 5-hydroxytryptamine. Its function is as follows. The enzyme apparently serves as a quinone reductase in connection with conjugation reactions of hydroquinones involved in detoxification pathways as well as in biosynthetic processes such as the vitamin K-dependent gamma-carboxylation of glutamate residues in prothrombin synthesis. The polypeptide is Ribosyldihydronicotinamide dehydrogenase [quinone] (NQO2) (Homo sapiens (Human)).